A 340-amino-acid polypeptide reads, in one-letter code: Ferrochelatase (340 aa).

Positions 189 and 292 each coordinate Fe cation.

Belongs to the ferrochelatase family.

Its subcellular location is the cytoplasm. The enzyme catalyses heme b + 2 H(+) = protoporphyrin IX + Fe(2+). It functions in the pathway porphyrin-containing compound metabolism; protoheme biosynthesis; protoheme from protoporphyrin-IX: step 1/1. In terms of biological role, catalyzes the ferrous insertion into protoporphyrin IX. The sequence is that of Ferrochelatase from Pseudomonas paraeruginosa (strain DSM 24068 / PA7) (Pseudomonas aeruginosa (strain PA7)).